The primary structure comprises 188 residues: Peptidyl-tRNA hydrolase (188 aa).

TRNA is bound at residue Tyr15. The active-site Proton acceptor is the His20. Residues Phe66, Asn68, and Asn114 each contribute to the tRNA site.

Belongs to the PTH family. Monomer.

It localises to the cytoplasm. The catalysed reaction is an N-acyl-L-alpha-aminoacyl-tRNA + H2O = an N-acyl-L-amino acid + a tRNA + H(+). Functionally, hydrolyzes ribosome-free peptidyl-tRNAs (with 1 or more amino acids incorporated), which drop off the ribosome during protein synthesis, or as a result of ribosome stalling. Its function is as follows. Catalyzes the release of premature peptidyl moieties from peptidyl-tRNA molecules trapped in stalled 50S ribosomal subunits, and thus maintains levels of free tRNAs and 50S ribosomes. The protein is Peptidyl-tRNA hydrolase of Lactococcus lactis subsp. cremoris (strain MG1363).